Here is a 251-residue protein sequence, read N- to C-terminus: NADPH-dependent oxidoreductase (251 aa).

It belongs to the flavin oxidoreductase frp family. FMN serves as cofactor.

In terms of biological role, reduces FMN, organic nitro compounds and disulfide DTNB. Involved in maintenance of the cellular redox state and the disulfide stress response. The chain is NADPH-dependent oxidoreductase (nfrA) from Staphylococcus aureus (strain Mu50 / ATCC 700699).